The chain runs to 376 residues: Calcium uniporter protein, mitochondrial (376 aa).

The N-terminal 34 residues, 1 to 34 (MAAKVCRSVLLLSRSSGAVASSAYPAFGVSSQRH), are a transit peptide targeting the mitochondrion. The Mitochondrial matrix segment spans residues 35 to 257 (QGTKTEALSM…LSKKAERRTT (223 aa)). Positions 99–189 (VSVVYQNGLP…TSYLVQPPRR (91 aa)) are N-terminal MCU domain. The stretch at 213–254 (TLRIEEHQLNKERELIGRLEDLNSQLQPLEKVKEELSKKAER) forms a coiled coil. Residues 258–280 (WVLWGGMAYMATQFGILARLTWW) form a helical membrane-spanning segment. Topologically, residues 281–289 (EYSWDIMEP) are mitochondrial intermembrane. The Selectivity filter motif lies at 284–292 (WDIMEPVTY). A Ca(2+)-binding site is contributed by Glu-288. Residues 290–309 (VTYFITYGTAMAMYAYFVLT) traverse the membrane as a helical segment. Residues 309-314 (TRQEYL) form a juxtamembrane helix region. The Mitochondrial matrix portion of the chain corresponds to 310-376 (RQEYLYPDAR…PIQQIDTSKD (67 aa)). A coiled-coil region spans residues 336 to 363 (FDIEKYNKLKDAIAEAELDLKRLRDPLQ).

The protein belongs to the MCU (TC 1.A.77) family. As to quaternary structure, homotetramer. Component of the uniplex complex.

The protein resides in the mitochondrion inner membrane. It catalyses the reaction Ca(2+)(in) = Ca(2+)(out). With respect to regulation, MCU channel activity is regulated by the heterodimer composed of micu1 and micu2, which act as calcium-sensors. At low calcium levels, micu1 occludes the pore of the MCU channel, preventing mitochondrial calcium uptake. At higher calcium levels, calcium-binding to micu1 and micu2 induces a conformational change that weakens mcu-micu1 interactions and moves the micu1-micu2 heterodimer away from the pore, allowing calcium permeation through the channel. MCU channel activity is gated by emre/smdt1 via the juxtamembrane helix loop. Inhibited by ruthenium red or its derivative Ru360. In terms of biological role, channel-forming and calcium-conducting subunit of the mitochondrial inner membrane calcium uniporter complex (uniplex), which mediates calcium uptake into the mitochondrial matrix. Mcu channel activity is regulated by the calcium-sensor subunits of the uniplex micu1 and micu2. Mitochondrial calcium homeostasis plays key roles in cellular physiology and regulates ATP production, cytoplasmic calcium signals and activation of cell death pathways. Involved in buffering the amplitude of systolic calcium rises in cardiomyocytes. While dispensable for baseline homeostatic cardiac function, acts as a key regulator of short-term mitochondrial calcium loading underlying a 'fight-or-flight' response during acute stress: acts by mediating a rapid increase of mitochondrial calcium in pacemaker cells. Mitochondrial calcium uptake in skeletal muscle cells is involved in muscle size in adults. The protein is Calcium uniporter protein, mitochondrial of Danio rerio (Zebrafish).